The following is a 447-amino-acid chain: Putative branched-chain amino acid carrier protein SAUSA300_1300 (447 aa).

A run of 12 helical transmembrane segments spans residues 6-26 (WVIG…IFPP), 40-60 (ILAF…VGAL), 74-94 (PKFS…LFAI), 114-134 (SSIA…YICL), 143-163 (IGSL…IKGY), 193-213 (GYLT…VNAV), 229-249 (LTAG…LGYI), 290-310 (LLGI…IVAV), 326-346 (FVLV…NAVI), 350-370 (IPVL…ILIA), 382-402 (IPVI…LGWL), and 417-437 (LEWF…GIFV).

This sequence belongs to the branched chain amino acid transporter family.

Its subcellular location is the cell membrane. Its function is as follows. Component of the transport system for branched-chain amino acids (leucine, isoleucine and valine), which is coupled to a proton motive force (Potential). Contributes to NaCl tolerance. The polypeptide is Putative branched-chain amino acid carrier protein SAUSA300_1300 (Staphylococcus aureus (strain USA300)).